The sequence spans 206 residues: Thymidylate kinase (206 aa).

Residue 14 to 21 coordinates ATP; that stretch reads GGEGIGKS.

This sequence belongs to the thymidylate kinase family.

The catalysed reaction is dTMP + ATP = dTDP + ADP. Its function is as follows. Phosphorylation of dTMP to form dTDP in both de novo and salvage pathways of dTTP synthesis. The sequence is that of Thymidylate kinase from Rickettsia bellii (strain OSU 85-389).